A 313-amino-acid chain; its full sequence is Beta-ketoacyl-[acyl-carrier-protein] synthase III (313 aa).

Residues Cys-112 and His-238 contribute to the active site. The segment at 239–243 is ACP-binding; the sequence is QANIR. The active site involves Asn-268.

This sequence belongs to the thiolase-like superfamily. FabH family. Homodimer.

It localises to the cytoplasm. It carries out the reaction malonyl-[ACP] + acetyl-CoA + H(+) = 3-oxobutanoyl-[ACP] + CO2 + CoA. It participates in lipid metabolism; fatty acid biosynthesis. Its function is as follows. Catalyzes the condensation reaction of fatty acid synthesis by the addition to an acyl acceptor of two carbons from malonyl-ACP. Catalyzes the first condensation reaction which initiates fatty acid synthesis and may therefore play a role in governing the total rate of fatty acid production. Possesses both acetoacetyl-ACP synthase and acetyl transacylase activities. Its substrate specificity determines the biosynthesis of branched-chain and/or straight-chain of fatty acids. In Staphylococcus saprophyticus subsp. saprophyticus (strain ATCC 15305 / DSM 20229 / NCIMB 8711 / NCTC 7292 / S-41), this protein is Beta-ketoacyl-[acyl-carrier-protein] synthase III.